The primary structure comprises 189 residues: ATP synthase subunit delta (189 aa).

This sequence belongs to the ATPase delta chain family. As to quaternary structure, F-type ATPases have 2 components, F(1) - the catalytic core - and F(0) - the membrane proton channel. F(1) has five subunits: alpha(3), beta(3), gamma(1), delta(1), epsilon(1). F(0) has three main subunits: a(1), b(2) and c(10-14). The alpha and beta chains form an alternating ring which encloses part of the gamma chain. F(1) is attached to F(0) by a central stalk formed by the gamma and epsilon chains, while a peripheral stalk is formed by the delta and b chains.

It is found in the cell inner membrane. Functionally, f(1)F(0) ATP synthase produces ATP from ADP in the presence of a proton or sodium gradient. F-type ATPases consist of two structural domains, F(1) containing the extramembraneous catalytic core and F(0) containing the membrane proton channel, linked together by a central stalk and a peripheral stalk. During catalysis, ATP synthesis in the catalytic domain of F(1) is coupled via a rotary mechanism of the central stalk subunits to proton translocation. Its function is as follows. This protein is part of the stalk that links CF(0) to CF(1). It either transmits conformational changes from CF(0) to CF(1) or is implicated in proton conduction. The protein is ATP synthase subunit delta of Rickettsia bellii (strain OSU 85-389).